A 375-amino-acid chain; its full sequence is MEREGKSDPIPIDIILDILSRLSTNSIAKFGLASKFCGSILRGQDFIELFLITRPLSRPRLLFAVQNSDKWCLYSSPQSQFPDENHSLVVSADFHMELRRDMGQEIFGLVSGLLYFPNTRTGEVPVICNPSTGQYARLTQRSSMNNLSSLLGYDPIGKKYKVITPSSSHFDPENILTLGTGKVAWRSIRCLVDHYPESEGICINGVLYYMASNKFQFSGVKIASFNVRYETLKFLNADVDVTFCPALAKLINYKGKLCVLSCLWDNQIYPKPLRWKVLMLWLWVLEDAEKEEWLKREYTLPVNIVHGNVSVVGVTATGEIILSMDYTSESFFVYYFNPERNTLEKVEIQGFEGSEKNLSSRVYTFVDYAEDVKFI.

Residues 5-52 (GKSDPIPIDIILDILSRLSTNSIAKFGLASKFCGSILRGQDFIELFLI) form the F-box domain.

The chain is Putative F-box protein At5g52620 from Arabidopsis thaliana (Mouse-ear cress).